The sequence spans 115 residues: Cell division topological specificity factor (115 aa).

Residues 93–115 (QLKEPKNQSELDSPETEGTDQKS) are disordered. The segment covering 104–115 (DSPETEGTDQKS) has biased composition (acidic residues).

It belongs to the MinE family.

Functionally, prevents the cell division inhibition by proteins MinC and MinD at internal division sites while permitting inhibition at polar sites. This ensures cell division at the proper site by restricting the formation of a division septum at the midpoint of the long axis of the cell. In Prochlorococcus marinus (strain NATL1A), this protein is Cell division topological specificity factor.